A 137-amino-acid polypeptide reads, in one-letter code: Hemoglobin subunit alpha-2 (137 aa).

One can recognise a Globin domain in the interval D1 to R137. H54 provides a ligand contact to O2. H83 contacts heme b.

Belongs to the globin family. The N-terminus of the mature protein is acetylated. In terms of tissue distribution, red blood cells.

The protein is Hemoglobin subunit alpha-2 of Telmatobius peruvianus (Andean frog).